The sequence spans 266 residues: GTP cyclohydrolase III (266 aa).

The protein belongs to the archaeal-type GTP cyclohydrolase family.

The enzyme catalyses GTP + 3 H2O = 2-amino-5-formylamino-6-(5-phospho-D-ribosylamino)pyrimidin-4(3H)-one + 2 phosphate + 2 H(+). Its function is as follows. Catalyzes the formation of 2-amino-5-formylamino-6-ribofuranosylamino-4(3H)-pyrimidinone ribonucleotide monophosphate and inorganic phosphate from GTP. Also has an independent pyrophosphate phosphohydrolase activity. The protein is GTP cyclohydrolase III of Methanococcus maripaludis (strain DSM 14266 / JCM 13030 / NBRC 101832 / S2 / LL).